The primary structure comprises 563 residues: Probable CoA ligase CCL11 (563 aa).

Residues 195-203, 328-333, Asp426, 438-441, and Lys534 each bind ATP; these read TSGTTSSPK, HGYGMT, and IKDR. Residues 263–328 are SBD1; the sequence is DGEIIFNLIR…TESLGFVISH (66 aa). The interval 329–405 is SBD2; sequence GYGMTEMLGV…LKGSSIMLGY (77 aa).

This sequence belongs to the ATP-dependent AMP-binding enzyme family.

The protein resides in the cytoplasm. The protein localises to the cytosol. This Humulus lupulus (European hop) protein is Probable CoA ligase CCL11.